Reading from the N-terminus, the 138-residue chain is Basic phospholipase A2 homolog 7 (138 aa).

Residues 1-16 form the signal peptide; the sequence is MRTLWLMAVLLVGVEG. 6 disulfide bridges follow: Cys42–Cys131, Cys44–Cys60, Cys59–Cys111, Cys65–Cys138, Cys66–Cys104, and Cys91–Cys102. Residues 121 to 133 are important for membrane-damaging activities in eukaryotes and bacteria; heparin-binding; that stretch reads KKKKINLKLFCKK.

This sequence belongs to the phospholipase A2 family. Group II subfamily. K49 sub-subfamily. Expressed by the venom gland.

It localises to the secreted. Its function is as follows. Snake venom phospholipase A2 homolog that lacks enzymatic activity. Is myotoxic and displays edema-inducing activities. A model of myotoxic mechanism has been proposed: an apo Lys49-PLA2 is activated by the entrance of a hydrophobic molecule (e.g. fatty acid) at the hydrophobic channel of the protein leading to a reorientation of a monomer. This reorientation causes a transition between 'inactive' to 'active' states, causing alignment of C-terminal and membrane-docking sites (MDoS) side-by-side and putting the membrane-disruption sites (MDiS) in the same plane, exposed to solvent and in a symmetric position for both monomers. The MDoS region stabilizes the toxin on membrane by the interaction of charged residues with phospholipid head groups. Subsequently, the MDiS region destabilizes the membrane with penetration of hydrophobic residues. This insertion causes a disorganization of the membrane, allowing an uncontrolled influx of ions (i.e. calcium and sodium), and eventually triggering irreversible intracellular alterations and cell death. In Craspedocephalus gramineus (Bamboo pit viper), this protein is Basic phospholipase A2 homolog 7.